Consider the following 561-residue polypeptide: MEVTMEDRSVKADKADRDDNNTTSTELLGKMRQTKVISTNQNNNHLIDRMVSIYEMEMIKSQSTETISDVSDVLEFTVIDNCSHGTHTLEHDLRLKGEPIGKSESVKGVSRSLIIQIGMTVIFCALEFITGVVCSSIAMLADSYHMAADVMALIVAFTCIKIATRPSTRLGYGWVRAETLGGFFNGIFMCTVCVLVFQEAVGRIINVHMITHPLQVLVIGFIGLLINLFGMFNLSGHGHSHGGGSHGHSHGGSHGHSHNNKKTKKNDGHGHSHANGHGHSHDGKSDCNGEEEPDHTRLNGKFRSASAMANSDANVRLLDNDDNSNDIIERRLSGVNSQNTIIATVDRQMTPYGTHMASEVLNVSSNNLDKSAQKTEQKKDKNVNIHGVWLHLLSDAFGSVIVMISAGFVYFLPTWKIAAYLDPILSISLASIMGFTAVVLVKTSGEKLLKQTPEGLDLEKVKKDLCSIVGVSKVEKLSVWTLCGQRIIAAAHVNICHPAVFPEAAYKIKNYFHDLGVHSTTIEPTFEDTCMQSMRIMVKKVVDGKSIEEPVSVSTENEITE.

The segment covering 1–20 (MEVTMEDRSVKADKADRDDN) has biased composition (basic and acidic residues). The interval 1–26 (MEVTMEDRSVKADKADRDDNNTTSTE) is disordered. Topologically, residues 1–112 (MEVTMEDRSV…SESVKGVSRS (112 aa)) are cytoplasmic. The helical transmembrane segment at 113-133 (LIIQIGMTVIFCALEFITGVV) threads the bilayer. Residues 134–136 (CSS) are Extracellular-facing. A helical transmembrane segment spans residues 137–157 (IAMLADSYHMAADVMALIVAF). Residues 158 to 176 (TCIKIATRPSTRLGYGWVR) lie on the Cytoplasmic side of the membrane. Residues 177-197 (AETLGGFFNGIFMCTVCVLVF) form a helical membrane-spanning segment. The Extracellular portion of the chain corresponds to 198–215 (QEAVGRIINVHMITHPLQ). A helical membrane pass occupies residues 216 to 236 (VLVIGFIGLLINLFGMFNLSG). Topologically, residues 237 to 391 (HGHSHGGGSH…NVNIHGVWLH (155 aa)) are cytoplasmic. Residues 240-304 (SHGGGSHGHS…HTRLNGKFRS (65 aa)) are disordered. Residues 246–270 (HGHSHGGSHGHSHNNKKTKKNDGHG) are 6 X 2 AA approximate repeats of H-G. The span at 247 to 264 (GHSHGGSHGHSHNNKKTK) shows a compositional bias: basic residues. A helical transmembrane segment spans residues 392–412 (LLSDAFGSVIVMISAGFVYFL). The Extracellular portion of the chain corresponds to 413–420 (PTWKIAAY). A helical transmembrane segment spans residues 421 to 441 (LDPILSISLASIMGFTAVVLV). Topologically, residues 442–561 (KTSGEKLLKQ…SVSTENEITE (120 aa)) are cytoplasmic.

This sequence belongs to the cation diffusion facilitator (CDF) transporter (TC 2.A.4) family. SLC30A subfamily. As to quaternary structure, interacts with lin-45 in a zinc-dependent manner. Expressed in intestinal cells. Expressed in the vulva.

The protein localises to the basolateral cell membrane. Its function is as follows. Involved in the regulation of Pn.p cell fate determination. Involved in zinc metabolism and the decrease of the cytosolic zinc concentration which is thought to modulate Ras signaling. Involved in zinc transport from the intestinal lumen to the pseudocoelum. The sequence is that of Cation diffusion facilitator family protein 1 (cdf-1) from Caenorhabditis elegans.